The chain runs to 263 residues: Hydroxyethylthiazole kinase (263 aa).

Met39 provides a ligand contact to substrate. The ATP site is built by Lys115 and Thr160. A substrate-binding site is contributed by Gly187.

Belongs to the Thz kinase family. Mg(2+) is required as a cofactor.

It carries out the reaction 5-(2-hydroxyethyl)-4-methylthiazole + ATP = 4-methyl-5-(2-phosphooxyethyl)-thiazole + ADP + H(+). The protein operates within cofactor biosynthesis; thiamine diphosphate biosynthesis; 4-methyl-5-(2-phosphoethyl)-thiazole from 5-(2-hydroxyethyl)-4-methylthiazole: step 1/1. Its function is as follows. Catalyzes the phosphorylation of the hydroxyl group of 4-methyl-5-beta-hydroxyethylthiazole (THZ). This is Hydroxyethylthiazole kinase from Staphylococcus aureus (strain JH9).